The following is an 844-amino-acid chain: MSTNLPNSCLVQIALTVSTHSGPQLIYHYPPSNYATATNSKKTHHPDIKKRYEYTDSENNSSSDDYSSGLSDSELSTDYADCSSDASESSLDSLPQSNHEDTVNSSTNNTFINNGLRSRQSQISANKLFQVLNQNNNNVAINGENSLRESLHSIRTSTNMSSTTDPRPEDELDAVDEELKILVDDLLDGSIFQQDTFQDISKVLNFNTEFVAELCSPRKEMCNTRFEFTVDDLCFLGLPIHADHKGRWKKSKKRKQASKRSARSSTARNSISRNSVGRNSIGRNRSKTESQGHINDVEEPADDENSDYEPSKSEMLNEMYCVPDAENDEFESLQQSINMFQVCFIMNPKIIEYNERVDDMYHYVVTRLSLILRYIQGKTGYVTRECVKIMKCKDEVSKHSRYYESLKSPWSKGKYMYERILYESSLARALTKCFNCIHNNEIANLEIDGDKIVSLQIPIKNEFSILPNLKEDAVLRGSFLSSILNESFIGRSTSLTNEDSDNLYANHDRLLDYGLLLLDEPENIIKGLENASFDNGVTDLLLINLVRQLKPTIRLGQYKLLIKELIDSNDSSYDDQFCETTLKSLCLHLIYWRHARLILPISSRNTYIVSPLAPISGFSTDDFKHGEYDTLIRQQEVPVNNNDEPSLIYQNKKVFNEKFPSLPSLPSFLQLMSTQKPRPFGHIIPSNEHKSMYLNALAWLMRYGYLTQLLTFVYVRVDKRIKIAVDEDLEKDNLRSNKHEKSGNFVTGGENYNSSEFDDLEMINDNDFTIILEPERNTALEKRWLYKCAEALPTDLQTLFRQVVKYFNGKVSLEYIMIKEGIPKNEIKRLLQALGKYIVEVKHW.

The signal sequence occupies residues 1–21; sequence MSTNLPNSCLVQIALTVSTHS. 2 disordered regions span residues 53-113 and 246-310; these read EYTD…TFIN and GRWK…DYEP. The segment covering 57 to 94 has biased composition (low complexity); that stretch reads SENNSSSDDYSSGLSDSELSTDYADCSSDASESSLDSL. Positions 103 to 113 are enriched in polar residues; it reads VNSSTNNTFIN. The segment covering 246–262 has biased composition (basic residues); it reads GRWKKSKKRKQASKRSA. Over residues 263 to 273 the composition is skewed to low complexity; that stretch reads RSSTARNSISR. Over residues 274 to 293 the composition is skewed to polar residues; that stretch reads NSVGRNSIGRNRSKTESQGH. Positions 297–307 are enriched in acidic residues; it reads VEEPADDENSD.

This sequence belongs to the NPR3 family.

Mediates inactivation of the TORC1 complex in response to amino acid starvation. Required for meiotic nuclear division. This chain is Nitrogen permease regulator 3 (NPR3), found in Kluyveromyces lactis (strain ATCC 8585 / CBS 2359 / DSM 70799 / NBRC 1267 / NRRL Y-1140 / WM37) (Yeast).